A 133-amino-acid polypeptide reads, in one-letter code: ATP synthase epsilon chain, chloroplastic (133 aa).

This sequence belongs to the ATPase epsilon chain family. In terms of assembly, F-type ATPases have 2 components, CF(1) - the catalytic core - and CF(0) - the membrane proton channel. CF(1) has five subunits: alpha(3), beta(3), gamma(1), delta(1), epsilon(1). CF(0) has three main subunits: a, b and c.

The protein localises to the plastid. Its subcellular location is the chloroplast thylakoid membrane. Produces ATP from ADP in the presence of a proton gradient across the membrane. The chain is ATP synthase epsilon chain, chloroplastic from Nicotiana tomentosiformis (Tobacco).